Reading from the N-terminus, the 456-residue chain is MFS-type transporter SLC18B1 (456 aa).

N-acetylmethionine is present on methionine 1. The disordered stretch occupies residues 1-24; sequence MEALGDLEGPRAPGGDDPAGSAGE. The Cytoplasmic segment spans residues 1–33; that stretch reads MEALGDLEGPRAPGGDDPAGSAGETPGWLSREQ. Residues 10 to 23 are compositionally biased toward low complexity; sequence PRAPGGDDPAGSAG. Serine 21 is subject to Phosphoserine. Residues 34-54 form a helical membrane-spanning segment; it reads VFVLISAASVNLGSMMCYSIL. Topologically, residues 55–70 are extracellular; the sequence is GPFFPKEAEKKGASNT. The chain crosses the membrane as a helical span at residues 71–91; the sequence is IIGMIFGCFALFELLASLVFG. Residues 92–100 are Cytoplasmic-facing; the sequence is NYLVHIGAK. A helical transmembrane segment spans residues 101–121; that stretch reads FMFVAGMFVSGGVTILFGVLD. The Extracellular segment spans residues 122-127; that stretch reads RVPDGP. The helical transmembrane segment at 128–148 threads the bilayer; sequence VFIAMCFLVRVMDAVSFAAAM. At 149-161 the chain is on the cytoplasmic side; sequence TASSSILAKAFPN. The helical transmembrane segment at 162-184 threads the bilayer; sequence NVATVLGSLETFSGLGLILGPPV. Topologically, residues 185–195 are extracellular; it reads GGFLYQSFGYE. The chain crosses the membrane as a helical span at residues 196-216; sequence VPFIVLGCVVLLMVPLNMYIL. Topologically, residues 217–230 are cytoplasmic; sequence PNYESDPGEHSFWK. A helical transmembrane segment spans residues 231–251; sequence LIALPKVGLIAFVINSLSSCF. Over 252 to 272 the chain is Extracellular; that stretch reads GFLDPTLSLFVLEKFNLPAGY. The helical transmembrane segment at 273–293 threads the bilayer; the sequence is VGLVFLGMALSYAISSPLFGL. Topologically, residues 294 to 304 are cytoplasmic; that stretch reads LSDKRPPLRKW. The chain crosses the membrane as a helical span at residues 305-325; that stretch reads LLVFGNLITAGCYMLLGPVPI. Residues 326–331 are Extracellular-facing; sequence LHIKSQ. Residues 332–352 traverse the membrane as a helical segment; it reads LWLLVLILVVSGLSAGMSIIP. Over 353–377 the chain is Cytoplasmic; it reads TFPEILSCAHENGFEEGLSTLGLVS. Residues 378–398 traverse the membrane as a helical segment; the sequence is GLFSAMWSIGAFMGPTLGGFL. Over 399–407 the chain is Extracellular; that stretch reads YEKIGFEWA. The helical transmembrane segment at 408-428 threads the bilayer; the sequence is AAIQGLWALISGLAMGLFYLL. The Cytoplasmic segment spans residues 429-456; the sequence is EYSRRKRSKSQNILSTEEERTTLLPNET. Serine 438 carries the phosphoserine modification.

This sequence belongs to the major facilitator superfamily. In terms of tissue distribution, expressed in various tissues including lung, placenta, adrenal gland, liver, testis, and brain.

It is found in the cytoplasmic vesicle. The protein resides in the secretory vesicle membrane. It localises to the secretory vesicle. Its subcellular location is the synaptic vesicle membrane. It catalyses the reaction spermine(in) + n H(+)(out) = spermine(out) + n H(+)(in). The catalysed reaction is spermidine(in) + n H(+)(out) = spermidine(out) + n H(+)(in). The enzyme catalyses serotonin(in) + n H(+)(out) = serotonin(out) + n H(+)(in). Proton-coupled polyamine antiporter involved in the translocation of polyamines from cytosol into secretory vesicles prior to their release via exocytosis. Uses the electrochemical proton gradient generated by a V-type proton-pumping ATPase to couple the efflux of protons with the uptake of a polyamine molecule. Facilitates vesicular storage of spermine and spermidine in astrocytes with an impact on glutamatergic neuronal transmission and memory formation. Upon antigen stimulation, regulates polyamine accumulation and release in mast cell secretory granules, which in turn potentiates mast cell degranulation and histamine secretion. In Homo sapiens (Human), this protein is MFS-type transporter SLC18B1.